We begin with the raw amino-acid sequence, 150 residues long: Endoribonuclease YbeY (150 aa).

Residues His116, His120, and His126 each contribute to the Zn(2+) site.

Belongs to the endoribonuclease YbeY family. Requires Zn(2+) as cofactor.

The protein resides in the cytoplasm. Functionally, single strand-specific metallo-endoribonuclease involved in late-stage 70S ribosome quality control and in maturation of the 3' terminus of the 16S rRNA. This is Endoribonuclease YbeY from Mesomycoplasma hyopneumoniae (strain 232) (Mycoplasma hyopneumoniae).